The chain runs to 479 residues: MNTILAQQIASEGGVEAWMIAQQHKSLLRFLTCGSVDDGKSTLIGRLLHDTLQIYEDQLSSLHNDSKRHGTQGEKLDLALLVDGLQAEREQGITIDVAYRYFSTEKRKFIIADTPGHEQYTRNMATGASTCDLAILLIDARKGVLDQTRRHSFISTLLGIKHLVVAINKMDLVDYREETFARIREDYLTFAEQLPGDLDIRFVPLSALEGDNVAAQSANMRWYSGPTLLEVLETVDIQRAVDRQPMRFPVQYVNRPNPDFRGYAGTLASGSVKVGERIKVLPSGVESSVARIVTFDGDKEEVCAGEAITLVLNDDIDISRGDLLLAANETLAPARHAAIDVVWMAEQPLAPGQSYDVKLAGKKTRARIEAICYQIDINNLTQRDVESLPLNGIGLVEMTFDEPLALDIYQQNPVTGGLIFIDRLSNVTVGAGMVRELDERGATPPVEYSAFELELNALVRRHFPHWDARDLLGDKHGAA.

One can recognise a tr-type G domain in the interval 25–239 (KSLLRFLTCG…EVLETVDIQR (215 aa)). The tract at residues 34-41 (GSVDDGKS) is G1. 34-41 (GSVDDGKS) contacts GTP. A G2 region spans residues 92–96 (GITID). Residues 113–116 (DTPG) are G3. GTP contacts are provided by residues 113-117 (DTPGH) and 168-171 (NKMD). The tract at residues 168–171 (NKMD) is G4. Residues 206–208 (SAL) are G5.

This sequence belongs to the TRAFAC class translation factor GTPase superfamily. Classic translation factor GTPase family. CysN/NodQ subfamily. As to quaternary structure, heterodimer composed of CysD, the smaller subunit, and CysN.

The catalysed reaction is sulfate + ATP + H(+) = adenosine 5'-phosphosulfate + diphosphate. It participates in sulfur metabolism; hydrogen sulfide biosynthesis; sulfite from sulfate: step 1/3. Its function is as follows. With CysD forms the ATP sulfurylase (ATPS) that catalyzes the adenylation of sulfate producing adenosine 5'-phosphosulfate (APS) and diphosphate, the first enzymatic step in sulfur assimilation pathway. APS synthesis involves the formation of a high-energy phosphoric-sulfuric acid anhydride bond driven by GTP hydrolysis by CysN coupled to ATP hydrolysis by CysD. This is Sulfate adenylyltransferase subunit 1 from Salmonella typhi.